We begin with the raw amino-acid sequence, 432 residues long: Luc7-like protein 3 (432 aa).

An N-acetylmethionine modification is found at M1. 3 positions are modified to phosphoserine: S3, S110, and S115. Residues 124–181 are a coiled coil; the sequence is KNEEKIQVLTDKIDVLLQQIEELGSEGKVEEAQGMMKLVEQLKEERELLRSTTSTIES. N6-acetyllysine is present on K231. Residues 234–287 show a composition bias toward basic and acidic residues; sequence LRKRTEEPDRDERLKKEKQEREEREKEREREREERERKRRREEEEREKERARDR. Residues 234–432 form a disordered region; the sequence is LRKRTEEPDR…IKSEGDTQSN (199 aa). Basic residues predominate over residues 288-301; that stretch reads ERRKRSRSRSRHSS. A compositionally biased stretch (basic and acidic residues) spans 302 to 311; the sequence is RTSDRRCSRS. A compositionally biased stretch (basic residues) spans 312-367; it reads RDHKRSRSRERRRSRSRDRRRSRSHDRSERKHRSRSRDRRRSKSRDRKSYKHRSKS. Positions 368-414 are enriched in basic and acidic residues; that stretch reads RDREQDRKSKEKEKRGSDDKKSSVKSGSREKQSEDTNTESKESDTKN. Phosphoserine is present on S420. Positions 421–432 are enriched in basic and acidic residues; that stretch reads EDIKSEGDTQSN. K424 is covalently cross-linked (Glycyl lysine isopeptide (Lys-Gly) (interchain with G-Cter in SUMO1); alternate). Residue K424 forms a Glycyl lysine isopeptide (Lys-Gly) (interchain with G-Cter in SUMO2); alternate linkage. Phosphoserine occurs at positions 425 and 431.

Belongs to the Luc7 family. In terms of assembly, may interact with SFRS1 and form homodimers. Interacts with JMJD6. Interacts with RBM25. Interacts with RSRC1 (via Arg/Ser-rich domain). Interacts with RRP1B. Post-translationally, phosphorylated in vitro by SRPK1, SRPK2 and CLK1. Widely expressed. Highest levels in heart, brain, pancreas, thymus, ovary, small intestine and peripheral blood leukocytes, as well as cerebellum, putamen and pituitary gland. Lowest levels in lung, liver and kidney. Also expressed in fetal tissues, including brain, heart, kidney, thymus and lung.

It is found in the nucleus speckle. Functionally, binds cAMP regulatory element DNA sequence. May play a role in RNA splicing. This Homo sapiens (Human) protein is Luc7-like protein 3 (LUC7L3).